Here is a 229-residue protein sequence, read N- to C-terminus: Dolichyldiphosphatase 1 (229 aa).

4 helical membrane-spanning segments follow: residues L27 to I47, M94 to L114, F120 to V140, and F156 to I176.

It belongs to the dolichyldiphosphatase family.

Its subcellular location is the endoplasmic reticulum membrane. It catalyses the reaction a di-trans,poly-cis-dolichyl diphosphate + H2O = a di-trans,poly-cis-dolichyl phosphate + phosphate + H(+). It functions in the pathway protein modification; protein glycosylation. Functionally, required for efficient N-glycosylation. Necessary for maintaining optimal levels of dolichol-linked oligosaccharides. Hydrolyzes dolichyl pyrophosphate at a very high rate and dolichyl monophosphate at a much lower rate. Does not act on phosphatidate. The chain is Dolichyldiphosphatase 1 (dolpp1) from Dictyostelium discoideum (Social amoeba).